The sequence spans 212 residues: Uracil phosphoribosyltransferase (212 aa).

Residues Arg-78, Arg-103, and 130–138 contribute to the 5-phospho-alpha-D-ribose 1-diphosphate site; that span reads DPMLATGSS. Residues Ile-193 and 198 to 200 contribute to the uracil site; that span reads GDA. Asp-199 is a 5-phospho-alpha-D-ribose 1-diphosphate binding site.

The protein belongs to the UPRTase family. Requires Mg(2+) as cofactor.

The catalysed reaction is UMP + diphosphate = 5-phospho-alpha-D-ribose 1-diphosphate + uracil. The protein operates within pyrimidine metabolism; UMP biosynthesis via salvage pathway; UMP from uracil: step 1/1. Allosterically activated by GTP. Catalyzes the conversion of uracil and 5-phospho-alpha-D-ribose 1-diphosphate (PRPP) to UMP and diphosphate. This is Uracil phosphoribosyltransferase from Pseudomonas savastanoi pv. phaseolicola (strain 1448A / Race 6) (Pseudomonas syringae pv. phaseolicola (strain 1448A / Race 6)).